A 347-amino-acid polypeptide reads, in one-letter code: uncharacterized protein (347 aa).

10 helical membrane-spanning segments follow: residues 6 to 26 (GSAS…GFAT), 37 to 57 (FGWF…LLGA), 90 to 110 (FMLF…GALF), 114 to 134 (LGMS…IVMT), 140 to 160 (IFGV…IVVA), 182 to 202 (WLLS…AVLV), 217 to 237 (GALI…LSLS), 262 to 282 (LIYL…NLYG), 289 to 309 (SFLP…AYIT), and 317 to 337 (LIST…GALL).

The protein resides in the cell membrane. This is an uncharacterized protein from Bacillus subtilis (strain 168).